The primary structure comprises 470 residues: Suppressor of SWI4 1 homolog (470 aa).

In terms of domain architecture, Brix spans Pro-29–Asn-292. Phosphoserine is present on residues Ser-238 and Ser-240. Disordered stretches follow at residues Ser-240–Gln-264 and Ala-323–Asn-470. A compositionally biased stretch (basic residues) spans Ala-342–Arg-355. Phosphoserine is present on Ser-362. Position 441 is an N6-acetyllysine (Lys-441). Basic residues predominate over residues Gln-447–Ala-457.

It localises to the nucleus. It is found in the nucleolus. May have a role in cell growth. This is Suppressor of SWI4 1 homolog (Ppan) from Mus musculus (Mouse).